Reading from the N-terminus, the 448-residue chain is Asparagine--tRNA ligase (448 aa).

This sequence belongs to the class-II aminoacyl-tRNA synthetase family. In terms of assembly, homodimer.

Its subcellular location is the cytoplasm. It carries out the reaction tRNA(Asn) + L-asparagine + ATP = L-asparaginyl-tRNA(Asn) + AMP + diphosphate + H(+). The sequence is that of Asparagine--tRNA ligase from Streptococcus thermophilus (strain ATCC BAA-250 / LMG 18311).